A 285-amino-acid chain; its full sequence is 4-diphosphocytidyl-2-C-methyl-D-erythritol kinase (285 aa).

Residue lysine 10 is part of the active site. Residue 93–103 (PIGGGLGGGSS) participates in ATP binding. Aspartate 135 is an active-site residue.

It belongs to the GHMP kinase family. IspE subfamily.

It catalyses the reaction 4-CDP-2-C-methyl-D-erythritol + ATP = 4-CDP-2-C-methyl-D-erythritol 2-phosphate + ADP + H(+). Its pathway is isoprenoid biosynthesis; isopentenyl diphosphate biosynthesis via DXP pathway; isopentenyl diphosphate from 1-deoxy-D-xylulose 5-phosphate: step 3/6. Functionally, catalyzes the phosphorylation of the position 2 hydroxy group of 4-diphosphocytidyl-2C-methyl-D-erythritol. In Vesicomyosocius okutanii subsp. Calyptogena okutanii (strain HA), this protein is 4-diphosphocytidyl-2-C-methyl-D-erythritol kinase.